The sequence spans 63 residues: Hirudin (63 aa).

The tract at residues 1–3 (VVY) is interaction with thrombin active site. Intrachain disulfides connect C6/C14, C16/C28, and C22/C39. The interval 39 to 63 (CVTGEGTPGPQSHNDGDFEEPEEYL) is disordered. Residue T45 is glycosylated (O-linked (GalNAc...) threonine). The interval 55 to 63 (DFEEPEEYL) is interaction with fibrinogen-binding exosite of thrombin. A Sulfotyrosine modification is found at Y62.

It belongs to the protease inhibitor I14 (hirudin) family.

The protein localises to the secreted. Its function is as follows. Hirudin is a potent thrombin-specific protease inhibitor. It forms a stable non-covalent complex with alpha-thrombin, thereby abolishing its ability to cleave fibrinogen. In Poecilobdella viridis (Indian freshwater leech), this protein is Hirudin.